The chain runs to 299 residues: MSKYSTIAPTERLPEWLRRPIGDASALERVQGLVKQNRLHTICEEGRCPNRGECYAAGTATFLLGGSICTRSCAFCQVEKGQAPMAVDPAEAQRVADAVEAMQLRYVVLTAVARDDLADHGAALFTTTMEAIRARNPLIAIEVLTPDFWGGCPDPQQAVAAQRERLSTVLAADPVCFNHNLETVQRLQGEVRRGATYERSLGLLAACRELAPTIPTKSGLMLGLGESRDEVIAAMRDLRAVDCQRLTLGQYLRPSLAHIPVDRYWTPEEFDELGAVARDLGFAQVRSGPLVRSSYHAAD.

Residues C43, C48, C54, C69, C73, C76, and S294 each coordinate [4Fe-4S] cluster. In terms of domain architecture, Radical SAM core spans 55–283 (YAAGTATFLL…GAVARDLGFA (229 aa)).

It belongs to the radical SAM superfamily. Lipoyl synthase family. Requires [4Fe-4S] cluster as cofactor.

Its subcellular location is the cytoplasm. The catalysed reaction is [[Fe-S] cluster scaffold protein carrying a second [4Fe-4S](2+) cluster] + N(6)-octanoyl-L-lysyl-[protein] + 2 oxidized [2Fe-2S]-[ferredoxin] + 2 S-adenosyl-L-methionine + 4 H(+) = [[Fe-S] cluster scaffold protein] + N(6)-[(R)-dihydrolipoyl]-L-lysyl-[protein] + 4 Fe(3+) + 2 hydrogen sulfide + 2 5'-deoxyadenosine + 2 L-methionine + 2 reduced [2Fe-2S]-[ferredoxin]. Its pathway is protein modification; protein lipoylation via endogenous pathway; protein N(6)-(lipoyl)lysine from octanoyl-[acyl-carrier-protein]: step 2/2. In terms of biological role, catalyzes the radical-mediated insertion of two sulfur atoms into the C-6 and C-8 positions of the octanoyl moiety bound to the lipoyl domains of lipoate-dependent enzymes, thereby converting the octanoylated domains into lipoylated derivatives. This Parasynechococcus marenigrum (strain WH8102) protein is Lipoyl synthase 2.